We begin with the raw amino-acid sequence, 144 residues long: HMG1/2-like protein (144 aa).

Disordered stretches follow at residues 1–42 and 85–144; these read MKGG…PPSA and PFIS…EDDD. Basic and acidic residues-rich tracts occupy residues 8–35 and 89–99; these read AKSDNKLAVKKQAADTKKTKKAVKDPNK and KAEKRKQEYEK. Positions 36–105 form a DNA-binding region, HMG box; it reads PKRPPSAFFV…EYEKNLQAYN (70 aa). Acidic residues predominate over residues 126 to 144; sequence NDDDEDQDGSGEDDSEDDD.

Belongs to the HMGB family. Expressed at higher levels in dark-grown tissues, such as roots; and at lower levels in light-grown tissues, such as cotyledons and stems.

Its subcellular location is the nucleus. This chain is HMG1/2-like protein, found in Ipomoea nil (Japanese morning glory).